Here is a 305-residue protein sequence, read N- to C-terminus: UDP-3-O-acyl-N-acetylglucosamine deacetylase (305 aa).

Residues histidine 79, histidine 238, and aspartate 242 each contribute to the Zn(2+) site. Histidine 265 serves as the catalytic Proton donor.

This sequence belongs to the LpxC family. Requires Zn(2+) as cofactor.

It catalyses the reaction a UDP-3-O-[(3R)-3-hydroxyacyl]-N-acetyl-alpha-D-glucosamine + H2O = a UDP-3-O-[(3R)-3-hydroxyacyl]-alpha-D-glucosamine + acetate. Its pathway is glycolipid biosynthesis; lipid IV(A) biosynthesis; lipid IV(A) from (3R)-3-hydroxytetradecanoyl-[acyl-carrier-protein] and UDP-N-acetyl-alpha-D-glucosamine: step 2/6. Functionally, catalyzes the hydrolysis of UDP-3-O-myristoyl-N-acetylglucosamine to form UDP-3-O-myristoylglucosamine and acetate, the committed step in lipid A biosynthesis. This chain is UDP-3-O-acyl-N-acetylglucosamine deacetylase, found in Mannheimia succiniciproducens (strain KCTC 0769BP / MBEL55E).